The following is a 338-amino-acid chain: Lipoyl synthase (338 aa).

Residues 1-24 are disordered; that stretch reads MTTVQEAVPNLIPTQDATPRPAPK. 7 residues coordinate [4Fe-4S] cluster: Cys-84, Cys-89, Cys-95, Cys-110, Cys-114, Cys-117, and Ser-324. The 218-residue stretch at 96–313 folds into the Radical SAM core domain; the sequence is FSGGTATFMI…AEEGYKMGFK (218 aa).

The protein belongs to the radical SAM superfamily. Lipoyl synthase family. [4Fe-4S] cluster is required as a cofactor.

It localises to the cytoplasm. It carries out the reaction [[Fe-S] cluster scaffold protein carrying a second [4Fe-4S](2+) cluster] + N(6)-octanoyl-L-lysyl-[protein] + 2 oxidized [2Fe-2S]-[ferredoxin] + 2 S-adenosyl-L-methionine + 4 H(+) = [[Fe-S] cluster scaffold protein] + N(6)-[(R)-dihydrolipoyl]-L-lysyl-[protein] + 4 Fe(3+) + 2 hydrogen sulfide + 2 5'-deoxyadenosine + 2 L-methionine + 2 reduced [2Fe-2S]-[ferredoxin]. It functions in the pathway protein modification; protein lipoylation via endogenous pathway; protein N(6)-(lipoyl)lysine from octanoyl-[acyl-carrier-protein]: step 2/2. Its function is as follows. Catalyzes the radical-mediated insertion of two sulfur atoms into the C-6 and C-8 positions of the octanoyl moiety bound to the lipoyl domains of lipoate-dependent enzymes, thereby converting the octanoylated domains into lipoylated derivatives. In Pseudomonas putida (strain ATCC 700007 / DSM 6899 / JCM 31910 / BCRC 17059 / LMG 24140 / F1), this protein is Lipoyl synthase.